The primary structure comprises 116 residues: Putative RNase MJ0125 (116 aa).

Active-site residues include R76 and H81. The RX(4)HXY motif motif lies at 76–83 (RDKLIHQY). Y83 carries the O-di-AMP-tyrosine modification.

It belongs to the HepT RNase toxin family. Homodimer, probably forms a complex with cognate antitoxin MJ0126. In terms of processing, modified by cognate antitoxin MJ0126; probably at least 2 successive AMPylation events occur on Tyr-83.

Functionally, probable toxic component of a putative type VII toxin-antitoxin (TA) system, probably an RNase. Probably neutralized by cognate antitoxin MJ0126. Neutralization may be due to AMPylation by MJ0126. The protein is Putative RNase MJ0125 of Methanocaldococcus jannaschii (strain ATCC 43067 / DSM 2661 / JAL-1 / JCM 10045 / NBRC 100440) (Methanococcus jannaschii).